We begin with the raw amino-acid sequence, 618 residues long: Membrane protein insertase YidC (618 aa).

The next 6 helical transmembrane spans lie at 3–23, 363–383, 439–459, 478–498, 520–540, and 545–565; these read KNTITGLVLIGILLVGFSFLS, WGLSMGIVLLLLTIMVKIVVF, LPMLLQFPILMALFMFVPSAI, FITFPFHIPFLGNHLSLFCLL, PQMAAMKWMMYLMPIMFLFVL, and SGLNYYYFISTLISVVTMIIL.

It belongs to the OXA1/ALB3/YidC family. Type 1 subfamily. In terms of assembly, interacts with the Sec translocase complex via SecD. Specifically interacts with transmembrane segments of nascent integral membrane proteins during membrane integration.

The protein localises to the cell membrane. Functionally, required for the insertion and/or proper folding and/or complex formation of integral membrane proteins into the membrane. Involved in integration of membrane proteins that insert both dependently and independently of the Sec translocase complex, as well as at least some lipoproteins. Aids folding of multispanning membrane proteins. The sequence is that of Membrane protein insertase YidC from Bacteroides fragilis (strain YCH46).